The sequence spans 316 residues: Ribosomal RNA small subunit methyltransferase H (316 aa).

S-adenosyl-L-methionine-binding positions include 35 to 37 (AGH), aspartate 55, phenylalanine 84, aspartate 105, and glutamine 112.

The protein belongs to the methyltransferase superfamily. RsmH family.

Its subcellular location is the cytoplasm. It carries out the reaction cytidine(1402) in 16S rRNA + S-adenosyl-L-methionine = N(4)-methylcytidine(1402) in 16S rRNA + S-adenosyl-L-homocysteine + H(+). Its function is as follows. Specifically methylates the N4 position of cytidine in position 1402 (C1402) of 16S rRNA. This is Ribosomal RNA small subunit methyltransferase H from Streptococcus pneumoniae (strain Hungary19A-6).